Here is a 574-residue protein sequence, read N- to C-terminus: Putative DNA-directed RNA polymerase subunit alpha-like 1 (574 aa).

The tract at residues 1 to 352 is alpha N-terminal domain (alpha-NTD); that stretch reads MTNNKNFADW…ELFSLFLQTS (352 aa). Residues 419–574 form an alpha C-terminal domain (alpha-CTD) region; sequence PDYDRYNSIT…RERKRGNREF (156 aa). The segment at 534 to 574 is disordered; the sequence is QETLRKEQDEQSSQQQKDQMEKRRWERQNRERERKRGNREF. Basic and acidic residues predominate over residues 551–574; it reads DQMEKRRWERQNRERERKRGNREF.

Belongs to the RNA polymerase alpha chain family. In terms of assembly, in plastids the minimal PEP RNA polymerase catalytic core is composed of four subunits: alpha, beta, beta', and beta''. When a (nuclear-encoded) sigma factor is associated with the core the holoenzyme is formed, which can initiate transcription.

It localises to the plastid. The protein localises to the chloroplast. The enzyme catalyses RNA(n) + a ribonucleoside 5'-triphosphate = RNA(n+1) + diphosphate. Functionally, DNA-dependent RNA polymerase catalyzes the transcription of DNA into RNA using the four ribonucleoside triphosphates as substrates. In Pelargonium hortorum (Common geranium), this protein is Putative DNA-directed RNA polymerase subunit alpha-like 1 (rpoAL1-A).